The following is a 121-amino-acid chain: Probable V-type proton ATPase subunit F (121 aa).

This sequence belongs to the V-ATPase F subunit family. In terms of assembly, V-ATPase is a heteromultimeric enzyme made up of two complexes: the ATP-hydrolytic V1 complex and the proton translocation V0 complex. The V1 complex consists of three catalytic AB heterodimers that form a heterohexamer, three peripheral stalks each consisting of EG heterodimers, one central rotor including subunits D and F, and the regulatory subunits C and H. The proton translocation complex V0 consists of the proton transport subunit a, a ring of proteolipid subunits c9c'', rotary subunit d, subunits e and f, and the accessory subunits vah-19/Ac45 and vah-20/PRR.

Functionally, subunit of the V1 complex of vacuolar(H+)-ATPase (V-ATPase), a multisubunit enzyme composed of a peripheral complex (V1) that hydrolyzes ATP and a membrane integral complex (V0) that translocates protons. V-ATPase is responsible for acidifying and maintaining the pH of intracellular compartments and in some cell types, is targeted to the plasma membrane, where it is responsible for acidifying the extracellular environment. Required along with other vacuolar ATPase components for the removal of protein aggregates which form in immature oocytes in the distal gonad. This removal occurs as the oocytes mature and move to the proximal gonad, is triggered by the introduction of sperm through mating and occurs before fertilization. The introduction of sperm triggers V-ATPase accumulation in proximal oocytes and induces lysosomal acidification which leads to engulfing of protein aggregates by lysosomes and subsequent clearance of the aggregates. Lysosomal acidification also leads to changes in mitochondrial morphology and function. Mitochondria in distal immature oocytes are fragmented, produce high levels of reactive oxygen species (ROS) and have high membrane potential, indicative of metabolic inactivity. In contrast, mitochondria in proximal mature oocytes are tubular with lower ROS levels and membrane potential, indicative of an active metabolic state required for aggregate mobilization before clearance. This is Probable V-type proton ATPase subunit F from Caenorhabditis elegans.